A 244-amino-acid polypeptide reads, in one-letter code: tRNA pseudouridine synthase A (244 aa).

D52 serves as the catalytic Nucleophile. Y110 provides a ligand contact to substrate.

This sequence belongs to the tRNA pseudouridine synthase TruA family. Homodimer.

The enzyme catalyses uridine(38/39/40) in tRNA = pseudouridine(38/39/40) in tRNA. Functionally, formation of pseudouridine at positions 38, 39 and 40 in the anticodon stem and loop of transfer RNAs. The protein is tRNA pseudouridine synthase A of Pelobacter propionicus (strain DSM 2379 / NBRC 103807 / OttBd1).